A 37-amino-acid chain; its full sequence is MKIRASARKICEKCRLIRRRGRILVICSNPRHKQRQG.

Belongs to the bacterial ribosomal protein bL36 family.

Its subcellular location is the plastid. It is found in the chloroplast. In Piper cenocladum (Ant piper), this protein is Large ribosomal subunit protein bL36c.